Consider the following 121-residue polypeptide: Large ribosomal subunit protein uL14c (121 aa).

The protein belongs to the universal ribosomal protein uL14 family. Part of the 50S ribosomal subunit.

Its subcellular location is the plastid. It localises to the organellar chromatophore. Binds to 23S rRNA. This Paulinella chromatophora protein is Large ribosomal subunit protein uL14c.